The chain runs to 505 residues: Actin nucleation-promoting factor WASL (505 aa).

At S2 the chain carries N-acetylserine. One can recognise a WH1 domain in the interval 34–141; sequence LGKKCVTMSS…KAVTDLLGRR (108 aa). 2 disordered regions span residues 138 to 163 and 184 to 205; these read LGRR…ATVD and HTKE…DIGT. Residues 186-198 show a composition bias toward basic residues; sequence KEKKKGKAKKKRL. A CRIB domain is found at 203 to 216; it reads IGTPSNFQHIGHVG. S242 carries the post-translational modification Phosphoserine; by TNK2. Residue Y256 is modified to Phosphotyrosine; by FAK1 and TNK2. Residues 266-406 form a disordered region; it reads EAVKNELRRQ…HQVPTTAGNK (141 aa). Pro residues-rich tracts occupy residues 276–364 and 371–391; these read APPP…PPPS and VAPP…PPGL. An Omega-N-methylarginine modification is found at R307. 2 WH2 domains span residues 405-422 and 433-450; these read NKAA…LKKV and GRDA…LKSV. The interval 476–505 is disordered; it reads QKRSKAIHSSDEDEDEDDEEDFEDDDEWED. Phosphoserine is present on residues S484 and S485. Positions 486-505 are enriched in acidic residues; it reads DEDEDEDDEEDFEDDDEWED.

In terms of assembly, binds actin and the Arp2/3 complex. Interacts with CDC42. Interacts with FCHSD1. Interacts with FCHSD2. Binds to SH3 domains of GRB2. Interacts with the C-terminal SH3 domain of DNMBP. Interacts with SNX9. Interacts with the WW domains of PRPF40A/FBP11. Interacts with PTK2/FAK1. Interacts with PACSIN1, PACSIN2 and PACSIN3. Interacts with NOSTRIN. Binds to TNK2. Interacts with SNX33. Interacts with NONO (via second RRM domain); the interaction is direct. Component of a multiprotein complex with NONO and SFPQ; associates with the complex via direct interaction with NONO. (Microbial infection) Interacts with E.coli effector protein EspF(U). Identified in a complex containing at least WASL, BAIAP2L1 and E.coli EspF(U). As to quaternary structure, (Microbial infection) Interacts with Shigella flexneri protein IcsA. The interaction with IcsA enhances the affinity of WASL for Arp2/3, thus assembling a tight complex which has maximal activity in actin assembly. In terms of processing, phosphorylation at Ser-242, Tyr-256, Ser-484 and Ser-485 enhances actin polymerization activity.

It localises to the cytoplasm. The protein localises to the cytoskeleton. It is found in the nucleus. Functionally, regulates actin polymerization by stimulating the actin-nucleating activity of the Arp2/3 complex. Involved in various processes, such as mitosis and cytokinesis, via its role in the regulation of actin polymerization. Together with CDC42, involved in the extension and maintenance of the formation of thin, actin-rich surface projections called filopodia. In addition to its role in the cytoplasm, also plays a role in the nucleus by regulating gene transcription, probably by promoting nuclear actin polymerization. Binds to HSF1/HSTF1 and forms a complex on heat shock promoter elements (HSE) that negatively regulates HSP90 expression. Plays a role in dendrite spine morphogenesis. Decreasing levels of DNMBP (using antisense RNA) alters apical junction morphology in cultured enterocytes, junctions curve instead of being nearly linear. In Homo sapiens (Human), this protein is Actin nucleation-promoting factor WASL (WASL).